Consider the following 673-residue polypeptide: FLYWCH-type zinc finger-containing protein 1 (673 aa).

The tract at residues 1-62 (MPLPEPSEQD…SSTATLPNNT (62 aa)) is disordered. Ser21 is modified (phosphoserine). The span at 47-62 (VASQETSSTATLPNNT) shows a compositional bias: polar residues. 2 FLYWCH-type zinc fingers span residues 92 to 150 (FLKT…DHCH) and 235 to 293 (FLKT…SHCH). Lys110 is covalently cross-linked (Glycyl lysine isopeptide (Lys-Gly) (interchain with G-Cter in SUMO2)). Residues 147 to 158 (DHCHPPEKEGLD) are compositionally biased toward basic and acidic residues. A disordered region spans residues 147 to 178 (DHCHPPEKEGLDRKKRHRGRPPSSALPEGAEV). Phosphoserine is present on residues Ser294 and Ser339. The tract at residues 351-402 (LSRSKSKSKSKSRSKSKSKSRSRSRKRAKKQQESSQEPPEEDQDVDPRGPEF) is disordered. The span at 354–379 (SKSKSKSKSRSKSKSKSRSRSRKRAK) shows a compositional bias: basic residues. FLYWCH-type zinc fingers lie at residues 402 to 460 (FLKT…SHCH), 490 to 548 (FLKT…RHCH), and 581 to 639 (FLRT…SHCH). Residues 646-673 (LEALRQREKAPSAAKKKKKKKKKKKGIH) are disordered. Positions 659-673 (AKKKKKKKKKKKGIH) are enriched in basic residues. Lys666 is covalently cross-linked (Glycyl lysine isopeptide (Lys-Gly) (interchain with G-Cter in SUMO2)).

As to quaternary structure, interacts with CTNNB1 (when unphosphorylated), perhaps preventing interaction of CTNNB1 with TCF4, and thereby regulating transcription activation; phosphorylation of CTNNB1 may inhibit the interaction.

Its subcellular location is the nucleus. The protein resides in the chromosome. The protein localises to the centromere. In terms of biological role, transcription cofactor. Negatively regulates transcription activation by catenin beta-1 CTNNB1, perhaps acting by competing with TCF4 for CTNNB1 binding. May play a role in DNA-damage response signaling. Binds specifically to DNA sequences at peri-centromeric chromatin loci. The chain is FLYWCH-type zinc finger-containing protein 1 (Flywch1) from Mus musculus (Mouse).